A 453-amino-acid chain; its full sequence is Cytochrome b-c1 complex subunit 2, mitochondrial (453 aa).

The transit peptide at 1–14 directs the protein to the mitochondrion; the sequence is MKLLSRAGSFSRFY. An N6-acetyllysine mark is found at Lys-66, Lys-199, and Lys-250. Ser-368 bears the Phosphoserine mark.

The protein belongs to the peptidase M16 family. UQCRC2/QCR2 subfamily. As to quaternary structure, component of the ubiquinol-cytochrome c oxidoreductase (cytochrome b-c1 complex, complex III, CIII), a multisubunit enzyme composed of 11 subunits. The complex is composed of 3 respiratory subunits cytochrome b, cytochrome c1 and Rieske protein UQCRFS1, 2 core protein subunits UQCRC1/QCR1 and UQCRC2/QCR2, and 6 low-molecular weight protein subunits UQCRH/QCR6, UQCRB/QCR7, UQCRQ/QCR8, UQCR10/QCR9, UQCR11/QCR10 and subunit 9, the cleavage product of Rieske protein UQCRFS1. The complex exists as an obligatory dimer and forms supercomplexes (SCs) in the inner mitochondrial membrane with NADH-ubiquinone oxidoreductase (complex I, CI) and cytochrome c oxidase (complex IV, CIV), resulting in different assemblies (supercomplex SCI(1)III(2)IV(1) and megacomplex MCI(2)III(2)IV(2)). Interacts with RAB5IF. Interacts with STMP1. Post-translationally, acetylation of Lys-159 and Lys-250 is observed in liver mitochondria from fasted mice but not from fed mice. As to expression, expressed in neurons and astrocytes of the cerebral cortex and hippocampus (at protein level).

It localises to the mitochondrion inner membrane. Functionally, component of the ubiquinol-cytochrome c oxidoreductase, a multisubunit transmembrane complex that is part of the mitochondrial electron transport chain which drives oxidative phosphorylation. The respiratory chain contains 3 multisubunit complexes succinate dehydrogenase (complex II, CII), ubiquinol-cytochrome c oxidoreductase (cytochrome b-c1 complex, complex III, CIII) and cytochrome c oxidase (complex IV, CIV), that cooperate to transfer electrons derived from NADH and succinate to molecular oxygen, creating an electrochemical gradient over the inner membrane that drives transmembrane transport and the ATP synthase. The cytochrome b-c1 complex catalyzes electron transfer from ubiquinol to cytochrome c, linking this redox reaction to translocation of protons across the mitochondrial inner membrane, with protons being carried across the membrane as hydrogens on the quinol. In the process called Q cycle, 2 protons are consumed from the matrix, 4 protons are released into the intermembrane space and 2 electrons are passed to cytochrome c. The 2 core subunits UQCRC1/QCR1 and UQCRC2/QCR2 are homologous to the 2 mitochondrial-processing peptidase (MPP) subunits beta-MPP and alpha-MPP respectively, and they seem to have preserved their MPP processing properties. May be involved in the in situ processing of UQCRFS1 into the mature Rieske protein and its mitochondrial targeting sequence (MTS)/subunit 9 when incorporated into complex III. In Mus musculus (Mouse), this protein is Cytochrome b-c1 complex subunit 2, mitochondrial (Uqcrc2).